Consider the following 755-residue polypeptide: LIM domain and actin-binding protein 1 (755 aa).

At methionine 1 the chain carries N-acetylmethionine. Serine 15 is subject to Phosphoserine. The segment covering 43-56 has biased composition (basic and acidic residues); sequence KAAEEANMERKKNN. A disordered region spans residues 43-151; sequence KAAEEANMER…YPRSEDSHDF (109 aa). A compositionally biased stretch (polar residues) spans 88–97; the sequence is DSLPNSSSDG. Phosphoserine is present on serine 132. The Required for interaction with NPC1L1 signature appears at 164–166; that stretch reads CLG. Composition is skewed to basic and acidic residues over residues 168-177 and 199-208; these read SRHEAEKPEM and MMFEKGEHSQ. The disordered stretch occupies residues 168-226; the sequence is SRHEAEKPEMSENTETSGKIEKYNVPLNRLKMMFEKGEHSQNKSPWTQGRNAGGRRLSE. Phosphoserine is present on residues serine 225, serine 230, and serine 242. The interval 241–379 is disordered; sequence LSSSAFNSEK…ESSPSKTAKK (139 aa). Residues 249–258 show a composition bias toward basic and acidic residues; that stretch reads EKNESKRNLE. Serine 263 bears the Phosphoserine mark. Residues 292–305 show a composition bias toward basic and acidic residues; the sequence is KPSESKTHKWEQKE. Residues 342-354 show a composition bias toward polar residues; it reads CNSQGRSEAQQPI. Phosphoserine is present on residues serine 348, serine 360, serine 367, and serine 372. Residues 363 to 375 show a composition bias toward polar residues; the sequence is ARTSSLPESSPSK. Residues 386–446 form the LIM zinc-binding domain; sequence ESCVECQKTV…KPHFNQLFKS (61 aa). Lysine 437 bears the N6-succinyllysine mark. Disordered stretches follow at residues 468–493 and 505–714; these read ENEE…GVED and SMEA…DTTT. Phosphoserine is present on serine 488. Positions 491-511 are required for interaction with MYO5B; it reads VEDAPIAKVGVLAASMEAKAS. 2 stretches are compositionally biased toward basic and acidic residues: residues 512–526 and 555–566; these read SQRE…ETKK and WPPEDEVCKTEA. Residues 599 to 611 are compositionally biased toward low complexity; it reads SSVKSPKPLSPSL. Residues serine 600, serine 603, serine 608, and serine 616 each carry the phosphoserine modification. Basic and acidic residues-rich tracts occupy residues 638 to 653 and 662 to 673; these read RPSR…RWQS and EAPRGRDGRSFE. A phosphoserine mark is found at serine 697, serine 722, and serine 737.

Interacts with NPC1L1; bridges NPC1L1 with MYO5B. Interacts with MYO5B; bridges MYO5B with NPC1L1. Interacts with PXN; this complex stabilizes actin dynamics. Interacts with F-actin and G-actin. Interacts with LUZP1 (via C-terminus); both proteins restrict ciliation and may work together to regulate this process. Binds RAB40B (GTP-bound); interaction influences LIMA1 subcellular localization in lamellipodia during cell migration. Post-translationally, phosphorylation of the C-terminal region by MAPK1/MAPK3 reduces its association with F-actin and contributes to actin filament reorganization and enhanced cell motility. In terms of processing, ubiquitinated by the ECS(RAB40B) complex leading to its degradation. As to expression, expressed throughout the kidney, including renal cortex, medulla, and glomeruli. Expressed in glomeruli, tubular epithelial cells, and extraglomerular vascular endothelial cells (at protein level).

The protein localises to the cytoplasm. The protein resides in the cell junction. It is found in the focal adhesion. Its subcellular location is the cytoskeleton. It localises to the stress fiber. The protein localises to the cell membrane. The protein resides in the cell projection. It is found in the ruffle. Its subcellular location is the lamellipodium. In terms of biological role, actin-binding protein involved in actin cytoskeleton regulation and dynamics. Increases the number and size of actin stress fibers and inhibits membrane ruffling. Inhibits actin filament depolymerization. Bundles actin filaments, delays filament nucleation and reduces formation of branched filaments. Acts as a negative regulator of primary cilium formation. Plays a role in cholesterol homeostasis. Influences plasma cholesterol levels through regulation of intestinal cholesterol absorption. May act as a scaffold protein by regulating NPC1L1 transportation, an essential protein for cholesterol absorption, to the plasma membrane by recruiting MYO5B to NPC1L1, and thus facilitates cholesterol uptake. This Rattus norvegicus (Rat) protein is LIM domain and actin-binding protein 1.